The chain runs to 127 residues: Large ribosomal subunit protein eL32B (127 aa).

Belongs to the eukaryotic ribosomal protein eL32 family. In terms of assembly, component of the large ribosomal subunit (LSU). Mature yeast ribosomes consist of a small (40S) and a large (60S) subunit. The 40S small subunit contains 1 molecule of ribosomal RNA (18S rRNA) and at least 33 different proteins. The large 60S subunit contains 3 rRNA molecules (25S, 5.8S and 5S rRNA) and at least 46 different proteins.

It localises to the cytoplasm. It is found in the nucleus. The protein localises to the nucleolus. In terms of biological role, component of the ribosome, a large ribonucleoprotein complex responsible for the synthesis of proteins in the cell. The small ribosomal subunit (SSU) binds messenger RNAs (mRNAs) and translates the encoded message by selecting cognate aminoacyl-transfer RNA (tRNA) molecules. The large subunit (LSU) contains the ribosomal catalytic site termed the peptidyl transferase center (PTC), which catalyzes the formation of peptide bonds, thereby polymerizing the amino acids delivered by tRNAs into a polypeptide chain. The nascent polypeptides leave the ribosome through a tunnel in the LSU and interact with protein factors that function in enzymatic processing, targeting, and the membrane insertion of nascent chains at the exit of the ribosomal tunnel. This is Large ribosomal subunit protein eL32B (rpl3201) from Schizosaccharomyces pombe (strain 972 / ATCC 24843) (Fission yeast).